Reading from the N-terminus, the 79-residue chain is Sulfur carrier protein TusA (79 aa).

Cys17 acts as the Cysteine persulfide intermediate in catalysis.

It belongs to the sulfur carrier protein TusA family.

The protein resides in the cytoplasm. In terms of biological role, sulfur carrier protein which probably makes part of a sulfur-relay system. The protein is Sulfur carrier protein TusA of Actinobacillus pleuropneumoniae serotype 5b (strain L20).